A 95-amino-acid chain; its full sequence is Protein translocase subunit SecE (95 aa).

A disordered region spans residues 1-35 (MTDAVGSIDMPDAEDEAPESKKKSRKGGKRGKKGP). Over residues 22 to 35 (KKSRKGGKRGKKGP) the composition is skewed to basic residues. A helical transmembrane segment spans residues 67-87 (VVIVFVVVMIGLVTVLDIGFA).

This sequence belongs to the SecE/SEC61-gamma family. As to quaternary structure, component of the Sec protein translocase complex. Heterotrimer consisting of SecY, SecE and SecG subunits. The heterotrimers can form oligomers, although 1 heterotrimer is thought to be able to translocate proteins. Interacts with the ribosome. Interacts with SecDF, and other proteins may be involved. Interacts with SecA.

It localises to the cell membrane. Its function is as follows. Essential subunit of the Sec protein translocation channel SecYEG. Clamps together the 2 halves of SecY. May contact the channel plug during translocation. This is Protein translocase subunit SecE from Streptomyces griseus.